Here is a 468-residue protein sequence, read N- to C-terminus: Keratin, type I cytoskeletal 26 (468 aa).

Residues 1-82 (MSFRLSGGSR…GNEHSLLSGN (82 aa)) are head. A coil 1A region spans residues 83 to 118 (EKVTMQNLNDRLASYLDHVHALEEANADLEQKIKGW). The IF rod domain occupies 83–398 (EKVTMQNLND…NLLDGEERKS (316 aa)). Positions 119 to 140 (YEKCEPGSSREHDHDYSRYFSV) are linker 1. The coil 1B stretch occupies residues 141 to 232 (IEDLKRQIIS…KSHEEEMEVL (92 aa)). Residues 233 to 255 (QYTAGGNVNVEMNATPGVDLTVL) are linker 12. Positions 256-394 (LNNMRAEYED…DIYCNLLDGE (139 aa)) are coil 2. The segment at 395–465 (ERKSKSTCYK…NITVEQRVPS (71 aa)) is tail.

Belongs to the intermediate filament family. Heterotetramer of two type I and two type II keratins. Strongly expressed in skin and scalp, and weak expression observed in thymus and tongue. In the hair follicle, expression is restricted to the mid- to upper inner root sheath cuticle, being present slightly above the apex of the dermal papilla (at protein level).

The protein is Keratin, type I cytoskeletal 26 of Homo sapiens (Human).